Consider the following 402-residue polypeptide: Probable sugar efflux transporter (402 aa).

A run of 12 helical transmembrane segments spans residues 15–35 (VLIMACAGFIFNTTEFVPVAM), 51–71 (GLMMTVYAWTVLIMSLPAMLA), 84–104 (LFIIFIVGHILLVIAWNFWIL), 109–129 (MCIALAHSVFWSITASLVMRI), 137–157 (QALGMLAIGTALATILGLPIG), 168–188 (VTFGIIAVLALSIMFLIIRLL), 209–229 (PLLLWLYVTTAIVISAHFTAY), 245–265 (NFATAVLLVFGFSGIAASLLF), 276–296 (FIVVSMSLLMFSLLLLLFSTE), 297–317 (AIIAMFSLVFIWGIGISCIGL), 333–353 (VATAIYSGIFNAGIGAGALFG), and 365–385 (IGYTGAALGLIGFIIFITTHL).

It belongs to the major facilitator superfamily. SotB (TC 2.A.1.2) family.

The protein resides in the cell inner membrane. Its function is as follows. Involved in the efflux of sugars. The physiological role may be the reduction of the intracellular concentration of toxic sugars or sugar metabolites. The polypeptide is Probable sugar efflux transporter (Haemophilus influenzae (strain 86-028NP)).